The primary structure comprises 115 residues: Large ribosomal subunit protein bL19 (115 aa).

This sequence belongs to the bacterial ribosomal protein bL19 family.

This protein is located at the 30S-50S ribosomal subunit interface and may play a role in the structure and function of the aminoacyl-tRNA binding site. The sequence is that of Large ribosomal subunit protein bL19 from Streptococcus pyogenes serotype M49 (strain NZ131).